The sequence spans 402 residues: Propionate kinase (402 aa).

2 residues coordinate ATP: asparagine 11 and lysine 18. Asparagine 11 is a binding site for Mg(2+). Arginine 86 is a substrate binding site. Aspartate 143 serves as the catalytic Proton donor/acceptor. Residues histidine 175, 203–207 (HLGNG), 278–280 (DLR), and 326–330 (GIGEN) contribute to the ATP site.

Belongs to the acetokinase family. TdcD subfamily. As to quaternary structure, homodimer. Requires Mg(2+) as cofactor.

The catalysed reaction is propanoate + ATP = propanoyl phosphate + ADP. It functions in the pathway amino-acid degradation; L-threonine degradation via propanoate pathway; propanoate from L-threonine: step 4/4. Functionally, catalyzes the conversion of propionyl phosphate and ADP to propionate and ATP. The sequence is that of Propionate kinase from Escherichia coli O157:H7.